A 173-amino-acid chain; its full sequence is Lithostathine-2 (173 aa).

Residues 1 to 22 (MAQNNVYLILFLCLMFLSYSQG) form the signal peptide. Residues 41–171 (INCPEGANAY…EAQYSFVCKF (131 aa)) form the C-type lectin domain. Disulfide bonds link Cys43/Cys54, Cys71/Cys169, and Cys144/Cys161.

As to expression, expressed only in regenerating islets and normal exocrine pancreas, but not in normal pancreatic islets. Expressed strongly in pancreas, weakly in liver, but not at all in gall bladder.

The protein localises to the secreted. Functionally, might act as an inhibitor of spontaneous calcium carbonate precipitation. The polypeptide is Lithostathine-2 (Reg2) (Mus musculus (Mouse)).